We begin with the raw amino-acid sequence, 333 residues long: Phosphate acyltransferase (333 aa).

Belongs to the PlsX family. As to quaternary structure, homodimer. Probably interacts with PlsY.

Its subcellular location is the cytoplasm. The enzyme catalyses a fatty acyl-[ACP] + phosphate = an acyl phosphate + holo-[ACP]. It participates in lipid metabolism; phospholipid metabolism. Catalyzes the reversible formation of acyl-phosphate (acyl-PO(4)) from acyl-[acyl-carrier-protein] (acyl-ACP). This enzyme utilizes acyl-ACP as fatty acyl donor, but not acyl-CoA. The polypeptide is Phosphate acyltransferase (Bacillus subtilis (strain 168)).